We begin with the raw amino-acid sequence, 276 residues long: Small ribosomal subunit protein uS2 (276 aa).

The tract at residues 251–276 (AEEAPAAAEEAPAAEPAAEETPAAEA) is disordered. A compositionally biased stretch (low complexity) spans 252-276 (EEAPAAAEEAPAAEPAAEETPAAEA).

It belongs to the universal ribosomal protein uS2 family.

The chain is Small ribosomal subunit protein uS2 from Jannaschia sp. (strain CCS1).